We begin with the raw amino-acid sequence, 206 residues long: Small ribosomal subunit protein uS4 (206 aa).

The region spanning 96–158 is the S4 RNA-binding domain; it reads GRLDNVVYRM…AKQQSRIKAA (63 aa).

It belongs to the universal ribosomal protein uS4 family. Part of the 30S ribosomal subunit. Contacts protein S5. The interaction surface between S4 and S5 is involved in control of translational fidelity.

One of the primary rRNA binding proteins, it binds directly to 16S rRNA where it nucleates assembly of the body of the 30S subunit. Its function is as follows. With S5 and S12 plays an important role in translational accuracy. The polypeptide is Small ribosomal subunit protein uS4 (Aliivibrio fischeri (strain ATCC 700601 / ES114) (Vibrio fischeri)).